The chain runs to 79 residues: Acyl carrier protein (79 aa).

The region spanning 2–77 (SDIEQRVKKI…QAIDYAKAHV (76 aa)) is the Carrier domain. Ser37 is modified (O-(pantetheine 4'-phosphoryl)serine).

The protein belongs to the acyl carrier protein (ACP) family. Post-translationally, 4'-phosphopantetheine is transferred from CoA to a specific serine of apo-ACP by AcpS. This modification is essential for activity because fatty acids are bound in thioester linkage to the sulfhydryl of the prosthetic group.

It is found in the cytoplasm. The protein operates within lipid metabolism; fatty acid biosynthesis. Its function is as follows. Carrier of the growing fatty acid chain in fatty acid biosynthesis. This Janthinobacterium sp. (strain Marseille) (Minibacterium massiliensis) protein is Acyl carrier protein.